Here is a 389-residue protein sequence, read N- to C-terminus: MAAVAAEARVFLEVRRRLQSALLILGDSKEGGLPMAVSVTPSSLRMQSPGGCTELRLPAGVRLAPSTCRGLQHVPGDGLHLRLHARAESRPELISVFNQSSQDQECCTFYCQSCGEVIIRDRMLLRVLPLPGDNWGALVDEWCCHPDPFANKPLHPRENDCFTGDCFYLVNLKSDLWQPRPEGAPVETHHLSSENHLKLKPKANTKVICKRCKVMLGETVSSETTKFYMTEIIILPSERNFPIIPRSQFVQSVLAQCVVELSSARSTFRFTIQGHDDKVYILLWLLNSDSLVIESLGQYTNIKKFPVLEDVLKPDSNSACNAVKVLYQPCIKSRNAELSSLWENDLSVHSLTLPSTTCLELLLILSKSNATLPPSLRCMNSFQVAFLKM.

Residue A2 is modified to N-acetylalanine. The short motif at 129–159 (PLPGDNWGALVDEWCCHPDPFANKPLHPREN) is the BRAT1-like motif element. C144 provides a ligand contact to Zn(2+). The segment at 235 to 257 (LPSERNFPIIPRSQFVQSVLAQC) is interaction with UBE2C. Residues 353-389 (LPSTTCLELLLILSKSNATLPPSLRCMNSFQVAFLKM) are HECT-like.

In terms of assembly, interacts with UBE2C/UbcH10 (E2 ubiquitin-conjugating enzyme). In vitro, interacts with cyclin-B. Ubiquitinated by UBCH10 (E2 ubiquitin-conjugating enzyme).

The protein resides in the cytoplasm. The enzyme catalyses S-ubiquitinyl-[E2 ubiquitin-conjugating enzyme]-L-cysteine + [acceptor protein]-L-lysine = [E2 ubiquitin-conjugating enzyme]-L-cysteine + N(6)-ubiquitinyl-[acceptor protein]-L-lysine.. It functions in the pathway protein modification; protein ubiquitination. Its function is as follows. E3 ubiquitin-protein ligase which accepts ubiquitin from specific E2 ubiquitin-conjugating enzymes, and transfers it to substrates, generally promoting their degradation by the proteasome. Independently of its E3 ubiquitin-protein ligase activity, acts as an inhibitor of CPSF3 endonuclease activity by blocking CPSF3 active site. This is E3 ubiquitin-protein ligase E3D (UBE3D) from Bos taurus (Bovine).